The chain runs to 299 residues: Apolipoprotein E (299 aa).

Residues 1-18 form the signal peptide; it reads MKALWAVLVVTLLAGCRA. 8 consecutive repeat copies span residues 74–95, 96–117, 118–139, 140–161, 162–183, 184–205, 206–223, and 224–245. Residues 74-245 form an 8 X 22 AA approximate tandem repeats region; that stretch reads VLMEDTMKEV…RLDEVREQME (172 aa). The LDL and other lipoprotein receptors binding stretch occupies residues 152 to 162; it reads HLRKLRKRLLR. 156 to 159 contacts heparin; the sequence is LRKR. The segment at 204 to 273 is lipid-binding and lipoprotein association; the sequence is AALTGQPLRE…GWFEPMMEDM (70 aa). 219 to 226 serves as a coordination point for heparin; sequence GERLRGRL. The interval 261-273 is specificity for association with VLDL; the sequence is RLKGWFEPMMEDM.

Belongs to the apolipoprotein A1/A4/E family. As to quaternary structure, homotetramer. May interact with ABCA1; functionally associated with ABCA1 in the biogenesis of HDLs. May interact with APP/A4 amyloid-beta peptide; the interaction is extremely stable in vitro but its physiological significance is unclear. May interact with MAPT. May interact with MAP2. In the cerebrospinal fluid, interacts with secreted SORL1. Interacts with PMEL; this allows the loading of PMEL luminal fragment on ILVs to induce fibril nucleation. APOE exists as multiple glycosylated and sialylated glycoforms within cells and in plasma. The extent of glycosylation and sialylation are tissue and context specific. In terms of processing, glycated in plasma VLDL. Post-translationally, phosphorylated by FAM20C in the extracellular medium.

It is found in the secreted. The protein resides in the extracellular space. The protein localises to the extracellular matrix. It localises to the extracellular vesicle. Its subcellular location is the endosome. It is found in the multivesicular body. APOE is an apolipoprotein, a protein associating with lipid particles, that mainly functions in lipoprotein-mediated lipid transport between organs via the plasma and interstitial fluids. APOE is a core component of plasma lipoproteins and is involved in their production, conversion and clearance. Apolipoproteins are amphipathic molecules that interact both with lipids of the lipoprotein particle core and the aqueous environment of the plasma. As such, APOE associates with chylomicrons, chylomicron remnants, very low density lipoproteins (VLDL) and intermediate density lipoproteins (IDL) but shows a preferential binding to high-density lipoproteins (HDL). It also binds a wide range of cellular receptors including the LDL receptor/LDLR and the very low-density lipoprotein receptor/VLDLR that mediate the cellular uptake of the APOE-containing lipoprotein particles. Finally, APOE also has a heparin-binding activity and binds heparan-sulfate proteoglycans on the surface of cells, a property that supports the capture and the receptor-mediated uptake of APOE-containing lipoproteins by cells. The chain is Apolipoprotein E (APOE) from Heterocephalus glaber (Naked mole rat).